The primary structure comprises 491 residues: Probable glycine dehydrogenase (decarboxylating) subunit 2 (491 aa).

K273 is modified (N6-(pyridoxal phosphate)lysine).

It belongs to the GcvP family. C-terminal subunit subfamily. In terms of assembly, the glycine cleavage system is composed of four proteins: P, T, L and H. In this organism, the P 'protein' is a heterodimer of two subunits. Requires pyridoxal 5'-phosphate as cofactor.

The catalysed reaction is N(6)-[(R)-lipoyl]-L-lysyl-[glycine-cleavage complex H protein] + glycine + H(+) = N(6)-[(R)-S(8)-aminomethyldihydrolipoyl]-L-lysyl-[glycine-cleavage complex H protein] + CO2. Functionally, the glycine cleavage system catalyzes the degradation of glycine. The P protein binds the alpha-amino group of glycine through its pyridoxal phosphate cofactor; CO(2) is released and the remaining methylamine moiety is then transferred to the lipoamide cofactor of the H protein. This is Probable glycine dehydrogenase (decarboxylating) subunit 2 from Bacillus cereus (strain B4264).